Reading from the N-terminus, the 513-residue chain is ATP synthase subunit alpha (513 aa).

169–176 is an ATP binding site; that stretch reads GDRQTGKT.

The protein belongs to the ATPase alpha/beta chains family. F-type ATPases have 2 components, CF(1) - the catalytic core - and CF(0) - the membrane proton channel. CF(1) has five subunits: alpha(3), beta(3), gamma(1), delta(1), epsilon(1). CF(0) has three main subunits: a(1), b(2) and c(9-12). The alpha and beta chains form an alternating ring which encloses part of the gamma chain. CF(1) is attached to CF(0) by a central stalk formed by the gamma and epsilon chains, while a peripheral stalk is formed by the delta and b chains.

It localises to the cell inner membrane. The enzyme catalyses ATP + H2O + 4 H(+)(in) = ADP + phosphate + 5 H(+)(out). Its function is as follows. Produces ATP from ADP in the presence of a proton gradient across the membrane. The alpha chain is a regulatory subunit. This chain is ATP synthase subunit alpha, found in Citrobacter koseri (strain ATCC BAA-895 / CDC 4225-83 / SGSC4696).